The following is a 191-amino-acid chain: Putative 3-methyladenine DNA glycosylase (191 aa).

Belongs to the DNA glycosylase MPG family.

In Carboxydothermus hydrogenoformans (strain ATCC BAA-161 / DSM 6008 / Z-2901), this protein is Putative 3-methyladenine DNA glycosylase.